The following is a 524-amino-acid chain: Peptide chain release factor 3 (524 aa).

One can recognise a tr-type G domain in the interval 11 to 278; it reads AKRRTFAIIS…SFVQYAPEPG (268 aa). GTP-binding positions include 20–27, 88–92, and 142–145; these read SHPDAGKT, DTPGH, and NKLD.

The protein belongs to the TRAFAC class translation factor GTPase superfamily. Classic translation factor GTPase family. PrfC subfamily.

It localises to the cytoplasm. Increases the formation of ribosomal termination complexes and stimulates activities of RF-1 and RF-2. It binds guanine nucleotides and has strong preference for UGA stop codons. It may interact directly with the ribosome. The stimulation of RF-1 and RF-2 is significantly reduced by GTP and GDP, but not by GMP. The sequence is that of Peptide chain release factor 3 from Lacticaseibacillus paracasei (strain ATCC 334 / BCRC 17002 / CCUG 31169 / CIP 107868 / KCTC 3260 / NRRL B-441) (Lactobacillus paracasei).